Here is a 178-residue protein sequence, read N- to C-terminus: Adenine phosphoribosyltransferase (178 aa).

The protein belongs to the purine/pyrimidine phosphoribosyltransferase family. Homodimer.

It localises to the cytoplasm. The enzyme catalyses AMP + diphosphate = 5-phospho-alpha-D-ribose 1-diphosphate + adenine. It participates in purine metabolism; AMP biosynthesis via salvage pathway; AMP from adenine: step 1/1. Catalyzes a salvage reaction resulting in the formation of AMP, that is energically less costly than de novo synthesis. This chain is Adenine phosphoribosyltransferase, found in Cereibacter sphaeroides (strain ATCC 17025 / ATH 2.4.3) (Rhodobacter sphaeroides).